The sequence spans 213 residues: GTP cyclohydrolase 1 (213 aa).

Cysteine 104, histidine 107, and cysteine 175 together coordinate Zn(2+).

It belongs to the GTP cyclohydrolase I family. Toroid-shaped homodecamer, composed of two pentamers of five dimers.

It catalyses the reaction GTP + H2O = 7,8-dihydroneopterin 3'-triphosphate + formate + H(+). Its pathway is cofactor biosynthesis; 7,8-dihydroneopterin triphosphate biosynthesis; 7,8-dihydroneopterin triphosphate from GTP: step 1/1. This chain is GTP cyclohydrolase 1, found in Brucella abortus (strain 2308).